An 85-amino-acid chain; its full sequence is MVKLRLKRVGKKFHAQYKIVAADARSPRDGKFIEELGHYDPHAKKLTLNKELLTKYLDQGAKPTDTVRTLLKQEQFYSNYIASKK.

Belongs to the bacterial ribosomal protein bS16 family.

This is Small ribosomal subunit protein bS16 from Metamycoplasma arthritidis (strain 158L3-1) (Mycoplasma arthritidis).